The following is a 709-amino-acid chain: Phosphoribosylformylglycinamidine synthase subunit PurL (709 aa).

The active site involves H36. ATP is bound by residues Y39 and K80. E82 is a Mg(2+) binding site. Substrate-binding positions include 83-86 (SHNH) and R105. The active-site Proton acceptor is H84. Residue D106 coordinates Mg(2+). Residue Q226 participates in substrate binding. D252 is a Mg(2+) binding site. Residue 294 to 296 (ETQ) coordinates substrate. ATP is bound by residues D470 and G507. S510 is a substrate binding site.

The protein belongs to the FGAMS family. As to quaternary structure, monomer. Part of the FGAM synthase complex composed of 1 PurL, 1 PurQ and 2 PurS subunits.

The protein localises to the cytoplasm. It catalyses the reaction N(2)-formyl-N(1)-(5-phospho-beta-D-ribosyl)glycinamide + L-glutamine + ATP + H2O = 2-formamido-N(1)-(5-O-phospho-beta-D-ribosyl)acetamidine + L-glutamate + ADP + phosphate + H(+). The protein operates within purine metabolism; IMP biosynthesis via de novo pathway; 5-amino-1-(5-phospho-D-ribosyl)imidazole from N(2)-formyl-N(1)-(5-phospho-D-ribosyl)glycinamide: step 1/2. In terms of biological role, part of the phosphoribosylformylglycinamidine synthase complex involved in the purines biosynthetic pathway. Catalyzes the ATP-dependent conversion of formylglycinamide ribonucleotide (FGAR) and glutamine to yield formylglycinamidine ribonucleotide (FGAM) and glutamate. The FGAM synthase complex is composed of three subunits. PurQ produces an ammonia molecule by converting glutamine to glutamate. PurL transfers the ammonia molecule to FGAR to form FGAM in an ATP-dependent manner. PurS interacts with PurQ and PurL and is thought to assist in the transfer of the ammonia molecule from PurQ to PurL. This is Phosphoribosylformylglycinamidine synthase subunit PurL from Saccharolobus islandicus (strain Y.N.15.51 / Yellowstone #2) (Sulfolobus islandicus).